The sequence spans 239 residues: Exosome complex component Rrp4 (239 aa).

An S1 motif domain is found at 67-139 (GDFVVGIVEE…PVQRVELSLL (73 aa)). The KH domain maps to 151 to 217 (QGGQVVEIDP…LAVRAIREIE (67 aa)).

This sequence belongs to the RRP4 family. In terms of assembly, component of the archaeal exosome complex. Forms a trimer of Rrp4 and/or Csl4 subunits. The trimer associates with a hexameric ring-like arrangement composed of 3 Rrp41-Rrp42 heterodimers.

It is found in the cytoplasm. In terms of biological role, non-catalytic component of the exosome, which is a complex involved in RNA degradation. Increases the RNA binding and the efficiency of RNA degradation. Confers strong poly(A) specificity to the exosome. In Methanopyrus kandleri (strain AV19 / DSM 6324 / JCM 9639 / NBRC 100938), this protein is Exosome complex component Rrp4.